Reading from the N-terminus, the 61-residue chain is MAVPRRKTSPSRRGMRRSADAISKPTYAEDKDSGELRRPHHLDLKTGMYKGRQVLKAKSDS.

Over residues 1–16 (MAVPRRKTSPSRRGMR) the composition is skewed to basic residues. The interval 1-61 (MAVPRRKTSP…RQVLKAKSDS (61 aa)) is disordered. The segment covering 27–44 (YAEDKDSGELRRPHHLDL) has biased composition (basic and acidic residues).

Belongs to the bacterial ribosomal protein bL32 family.

This chain is Large ribosomal subunit protein bL32, found in Nitrobacter winogradskyi (strain ATCC 25391 / DSM 10237 / CIP 104748 / NCIMB 11846 / Nb-255).